The chain runs to 313 residues: Homoserine O-succinyltransferase (313 aa).

Catalysis depends on Cys-142, which acts as the Acyl-thioester intermediate. Substrate is bound by residues Lys-163 and Ser-192. His-235 serves as the catalytic Proton acceptor. Glu-237 is an active-site residue. Residue Arg-249 participates in substrate binding.

Belongs to the MetA family.

The protein resides in the cytoplasm. The catalysed reaction is L-homoserine + succinyl-CoA = O-succinyl-L-homoserine + CoA. It participates in amino-acid biosynthesis; L-methionine biosynthesis via de novo pathway; O-succinyl-L-homoserine from L-homoserine: step 1/1. Transfers a succinyl group from succinyl-CoA to L-homoserine, forming succinyl-L-homoserine. This Shewanella oneidensis (strain ATCC 700550 / JCM 31522 / CIP 106686 / LMG 19005 / NCIMB 14063 / MR-1) protein is Homoserine O-succinyltransferase.